The primary structure comprises 466 residues: UDP-glycosyltransferase 91B1 (466 aa).

UDP-alpha-D-glucose is bound by residues threonine 286, 342 to 344 (VPQ), 359 to 367 (HCGWGSAVE), and 381 to 384 (NLDQ).

It belongs to the UDP-glycosyltransferase family.

This Arabidopsis thaliana (Mouse-ear cress) protein is UDP-glycosyltransferase 91B1 (UGT91B1).